We begin with the raw amino-acid sequence, 539 residues long: MAKIINFNDEARKKLEIGVNTLADAVKVTLGPRGRNVVLEKSYGAPLITNDGVTIAKEIELEDPFENMGAALVKEVAIKSNDVAGDGTTTATILAQAIVKEGLKMLSAGANPIFLKKGIELAAKEAIDVLKDKAKKIESNEEISQVASISAGDEEIGKLIAQAMAKVGETGVITVEEAKSLETTLETVEGMQFDKGYVSPYMVTDSERMTAELDNPLILLTDKKISSMKELLPLLEQTVQMSKPVLIVADDIEGEALTTLVINKLRGTLNVVAVKAPAFGDRRKAILEDIAILTGGEVISEEKGMKLEEATIQQLGKAKTVKVTKDLTVIVDGGGEQKDISARVNSIKAQIEETTSDYDKEKLQERLAKLSGGVAVIKVGAATEVEMKDKKLRIEDALNATRAAVEEGIVAGGGTILLDIIESMKDFNETGEIAMGIEIVKRALEAPIKQIAENCGLNGGVVLEKVRMSPKGFGFDAKNEKYVNMIECGIIDPAKVTRAAIQNSTSVASLLLTTEVVIANKKEEEKAPMGAGGMMPGMM.

ATP is bound by residues 29–32 (TLGP), 86–90 (DGTTT), Gly-413, and Asp-492.

This sequence belongs to the chaperonin (HSP60) family. In terms of assembly, forms a cylinder of 14 subunits composed of two heptameric rings stacked back-to-back. Interacts with the co-chaperonin GroES.

The protein localises to the cytoplasm. The catalysed reaction is ATP + H2O + a folded polypeptide = ADP + phosphate + an unfolded polypeptide.. Together with its co-chaperonin GroES, plays an essential role in assisting protein folding. The GroEL-GroES system forms a nano-cage that allows encapsulation of the non-native substrate proteins and provides a physical environment optimized to promote and accelerate protein folding. In Fusobacterium nucleatum subsp. polymorphum (Fusobacterium polymorphum), this protein is Chaperonin GroEL.